Here is a 111-residue protein sequence, read N- to C-terminus: Nucleoid-associated protein Cpar_0834 (111 aa).

The protein belongs to the YbaB/EbfC family. Homodimer.

It is found in the cytoplasm. The protein resides in the nucleoid. In terms of biological role, binds to DNA and alters its conformation. May be involved in regulation of gene expression, nucleoid organization and DNA protection. This chain is Nucleoid-associated protein Cpar_0834, found in Chlorobaculum parvum (strain DSM 263 / NCIMB 8327) (Chlorobium vibrioforme subsp. thiosulfatophilum).